A 490-amino-acid chain; its full sequence is Katanin p60 ATPase-containing subunit A-like 1 (490 aa).

Residue Met1 is modified to N-acetylmethionine. The interval 95 to 184 (DPAVWPPPVP…DGEMPKFDGA (90 aa)) is disordered. Residues 116–127 (PNREVRPLRKEM) show a composition bias toward basic and acidic residues. The span at 128–139 (AGVGARGPVGRA) shows a compositional bias: low complexity. A compositionally biased stretch (basic and acidic residues) spans 143 to 169 (SKSEKPSTSRDKDYRARGRDDKGRKNM). Phosphoserine is present on Ser174. 248-255 (GPPGTGKT) serves as a coordination point for ATP.

Belongs to the AAA ATPase family. Katanin p60 subunit A1 subfamily. A-like 1 sub-subfamily. Interacts with KATNB1 and KATNBL1. In terms of tissue distribution, expressed in testis, restricted to Sertoli cells (at protein level).

It localises to the cytoplasm. It is found in the cytoskeleton. The protein localises to the spindle pole. The protein resides in the spindle. It carries out the reaction n ATP + n H2O + a microtubule = n ADP + n phosphate + (n+1) alpha/beta tubulin heterodimers.. In terms of biological role, regulates microtubule dynamics in Sertoli cells, a process that is essential for spermiogenesis and male fertility. Severs microtubules in an ATP-dependent manner, promoting rapid reorganization of cellular microtubule arrays. Has microtubule-severing activity in vitro. This Homo sapiens (Human) protein is Katanin p60 ATPase-containing subunit A-like 1.